The primary structure comprises 67 residues: Small ribosomal subunit protein bS21 (67 aa).

Residues 37–52 (EKPSERKAREAAEAVR) are compositionally biased toward basic and acidic residues. The tract at residues 37–67 (EKPSERKAREAAEAVRRARKMERKRLEREGF) is disordered.

The protein belongs to the bacterial ribosomal protein bS21 family.

This chain is Small ribosomal subunit protein bS21, found in Gluconacetobacter diazotrophicus (strain ATCC 49037 / DSM 5601 / CCUG 37298 / CIP 103539 / LMG 7603 / PAl5).